The chain runs to 202 residues: Peroxynitrite isomerase (202 aa).

The short motif at 21 to 27 (GEWEGRG) is the GXWXGXG element. His193 is a binding site for heme b.

Belongs to the nitrobindin family. As to quaternary structure, homodimer. The cofactor is heme b.

The catalysed reaction is peroxynitrite = nitrate. The protein operates within nitrogen metabolism. Functionally, heme-binding protein able to scavenge peroxynitrite and to protect free L-tyrosine against peroxynitrite-mediated nitration, by acting as a peroxynitrite isomerase that converts peroxynitrite to nitrate. Therefore, this protein likely plays a role in peroxynitrite sensing and in the detoxification of reactive nitrogen and oxygen species (RNS and ROS, respectively). Is able to bind nitric oxide (NO) in vitro, but may act as a sensor of peroxynitrite levels in vivo. The polypeptide is Peroxynitrite isomerase (Pseudarthrobacter chlorophenolicus (strain ATCC 700700 / DSM 12829 / CIP 107037 / JCM 12360 / KCTC 9906 / NCIMB 13794 / A6) (Arthrobacter chlorophenolicus)).